The following is a 634-amino-acid chain: 1-deoxy-D-xylulose-5-phosphate synthase (634 aa).

Residues histidine 74 and 115–117 contribute to the thiamine diphosphate site; that span reads AHS. Position 146 (aspartate 146) interacts with Mg(2+). Thiamine diphosphate is bound by residues 147–148, asparagine 176, tyrosine 283, and glutamate 365; that span reads GA. Mg(2+) is bound at residue asparagine 176.

It belongs to the transketolase family. DXPS subfamily. In terms of assembly, homodimer. The cofactor is Mg(2+). Thiamine diphosphate serves as cofactor.

It catalyses the reaction D-glyceraldehyde 3-phosphate + pyruvate + H(+) = 1-deoxy-D-xylulose 5-phosphate + CO2. The protein operates within metabolic intermediate biosynthesis; 1-deoxy-D-xylulose 5-phosphate biosynthesis; 1-deoxy-D-xylulose 5-phosphate from D-glyceraldehyde 3-phosphate and pyruvate: step 1/1. Its function is as follows. Catalyzes the acyloin condensation reaction between C atoms 2 and 3 of pyruvate and glyceraldehyde 3-phosphate to yield 1-deoxy-D-xylulose-5-phosphate (DXP). In Burkholderia cenocepacia (strain ATCC BAA-245 / DSM 16553 / LMG 16656 / NCTC 13227 / J2315 / CF5610) (Burkholderia cepacia (strain J2315)), this protein is 1-deoxy-D-xylulose-5-phosphate synthase.